A 258-amino-acid polypeptide reads, in one-letter code: UPF0246 protein mma_1385 (258 aa).

Belongs to the UPF0246 family.

This Janthinobacterium sp. (strain Marseille) (Minibacterium massiliensis) protein is UPF0246 protein mma_1385.